Consider the following 361-residue polypeptide: Biotin synthase (361 aa).

The 232-residue stretch at 47-278 (VHGDEVALCG…AAHIFVMGGR (232 aa)) folds into the Radical SAM core domain. Residues Cys-65, Cys-69, and Cys-72 each contribute to the [4Fe-4S] cluster site. Residues Ser-110, Cys-143, and Cys-203 each contribute to the [2Fe-2S] cluster site. The interval 323–361 (TLRPPDTGKPWAFDGHAPSDADWNRKAAEPRPRPLPVVR) is disordered. Residues 339–354 (APSDADWNRKAAEPRP) are compositionally biased toward basic and acidic residues.

It belongs to the radical SAM superfamily. Biotin synthase family. In terms of assembly, homodimer. The cofactor is [4Fe-4S] cluster. It depends on [2Fe-2S] cluster as a cofactor.

It catalyses the reaction (4R,5S)-dethiobiotin + (sulfur carrier)-SH + 2 reduced [2Fe-2S]-[ferredoxin] + 2 S-adenosyl-L-methionine = (sulfur carrier)-H + biotin + 2 5'-deoxyadenosine + 2 L-methionine + 2 oxidized [2Fe-2S]-[ferredoxin]. The protein operates within cofactor biosynthesis; biotin biosynthesis; biotin from 7,8-diaminononanoate: step 2/2. In terms of biological role, catalyzes the conversion of dethiobiotin (DTB) to biotin by the insertion of a sulfur atom into dethiobiotin via a radical-based mechanism. In Anaeromyxobacter sp. (strain K), this protein is Biotin synthase.